A 146-amino-acid chain; its full sequence is Putative actin-depolymerizing factor 8 (146 aa).

Positions 14-144 (PAWIEVPEKS…DLEVLRGRAN (131 aa)) constitute an ADF-H domain.

Belongs to the actin-binding proteins ADF family.

Actin-depolymerizing protein. Severs actin filaments (F-actin) and binds to actin monomers. The sequence is that of Putative actin-depolymerizing factor 8 (ADF8) from Oryza sativa subsp. japonica (Rice).